The primary structure comprises 177 residues: Transcription termination/antitermination protein NusG (177 aa).

Positions 125-150 (EGENVRITEGPFANFTAIVEEYDMVR) constitute a KOW domain.

The protein belongs to the NusG family.

Its function is as follows. Participates in transcription elongation, termination and antitermination. The protein is Transcription termination/antitermination protein NusG of Campylobacter jejuni subsp. jejuni serotype O:2 (strain ATCC 700819 / NCTC 11168).